The sequence spans 241 residues: tRNA pseudouridine synthase A (241 aa).

Catalysis depends on D53, which acts as the Nucleophile. Substrate is bound at residue Y110.

Belongs to the tRNA pseudouridine synthase TruA family. In terms of assembly, homodimer.

It catalyses the reaction uridine(38/39/40) in tRNA = pseudouridine(38/39/40) in tRNA. Its function is as follows. Formation of pseudouridine at positions 38, 39 and 40 in the anticodon stem and loop of transfer RNAs. This Malacoplasma penetrans (strain HF-2) (Mycoplasma penetrans) protein is tRNA pseudouridine synthase A.